A 297-amino-acid chain; its full sequence is Zinc finger protein 784 (297 aa).

Residues 1–12 (MAAARPDPPIPS) are compositionally biased toward pro residues. Residues 1–39 (MAAARPDPPIPSSPTRESPSPEPPDLVLVPDGRPVTPPG) are disordered. Position 13 is a phosphoserine (Ser-13). 3 consecutive C2H2-type zinc fingers follow at residues 64-86 (FHCA…EHGH), 100-122 (SRCH…YSLH), and 128-150 (YRCS…QHRH). The interval 149 to 175 (RHGVEPGTSERLLPTTTTGQPNSRVAQ) is disordered. The span at 162–173 (PTTTTGQPNSRV) shows a compositional bias: polar residues. 3 consecutive C2H2-type zinc fingers follow at residues 195-217 (FACR…ERVH), 223-245 (YHCS…ARIH), and 251-273 (FRCM…QRTH). The segment at 268–297 (KHQRTHFHGPGSGVGESRGQLRSSSVSQES) is disordered. Residues 287–297 (QLRSSSVSQES) are compositionally biased toward polar residues.

This sequence belongs to the krueppel C2H2-type zinc-finger protein family.

Its subcellular location is the nucleus. May be involved in transcriptional regulation. The polypeptide is Zinc finger protein 784 (Znf784) (Mus musculus (Mouse)).